A 61-amino-acid polypeptide reads, in one-letter code: Sperm protamine P1 (61 aa).

The segment at 1-61 is disordered; it reads MARYRRRSRS…RRYSRRGRRR (61 aa).

Belongs to the protamine P1 family. As to expression, testis.

It localises to the nucleus. The protein resides in the chromosome. Its function is as follows. Protamines substitute for histones in the chromatin of sperm during the haploid phase of spermatogenesis. They compact sperm DNA into a highly condensed, stable and inactive complex. This is Sperm protamine P1 (PRM1) from Dasyurus hallucatus (Northern quoll).